Here is a 162-residue protein sequence, read N- to C-terminus: 2-C-methyl-D-erythritol 2,4-cyclodiphosphate synthase (162 aa).

Residues aspartate 10 and histidine 12 each contribute to the a divalent metal cation site. Residues 10–12 (DVH) and 36–37 (HS) each bind 4-CDP-2-C-methyl-D-erythritol 2-phosphate. Histidine 44 contributes to the a divalent metal cation binding site. Residues 58 to 60 (DIG), 63 to 67 (FSDTD), and arginine 144 each bind 4-CDP-2-C-methyl-D-erythritol 2-phosphate.

It belongs to the IspF family. As to quaternary structure, homotrimer. A divalent metal cation serves as cofactor.

It catalyses the reaction 4-CDP-2-C-methyl-D-erythritol 2-phosphate = 2-C-methyl-D-erythritol 2,4-cyclic diphosphate + CMP. It functions in the pathway isoprenoid biosynthesis; isopentenyl diphosphate biosynthesis via DXP pathway; isopentenyl diphosphate from 1-deoxy-D-xylulose 5-phosphate: step 4/6. Involved in the biosynthesis of isopentenyl diphosphate (IPP) and dimethylallyl diphosphate (DMAPP), two major building blocks of isoprenoid compounds. Catalyzes the conversion of 4-diphosphocytidyl-2-C-methyl-D-erythritol 2-phosphate (CDP-ME2P) to 2-C-methyl-D-erythritol 2,4-cyclodiphosphate (ME-CPP) with a corresponding release of cytidine 5-monophosphate (CMP). The polypeptide is 2-C-methyl-D-erythritol 2,4-cyclodiphosphate synthase (Burkholderia mallei (strain NCTC 10247)).